Reading from the N-terminus, the 105-residue chain is Large ribosomal subunit protein uL24 (105 aa).

It belongs to the universal ribosomal protein uL24 family. As to quaternary structure, part of the 50S ribosomal subunit.

Functionally, one of two assembly initiator proteins, it binds directly to the 5'-end of the 23S rRNA, where it nucleates assembly of the 50S subunit. One of the proteins that surrounds the polypeptide exit tunnel on the outside of the subunit. The protein is Large ribosomal subunit protein uL24 of Nitrosococcus oceani (strain ATCC 19707 / BCRC 17464 / JCM 30415 / NCIMB 11848 / C-107).